A 977-amino-acid chain; its full sequence is Disks large-associated protein 3 (977 aa).

A compositionally biased stretch (basic and acidic residues) spans 1-10 (MRGYHGDRGS). Disordered regions lie at residues 1–24 (MRGY…QHMD), 52–96 (AGLG…MYPG), 137–167 (FHTL…ESPS), 181–289 (AKSH…CLDA), 398–417 (AMGD…SPKA), and 529–582 (PGSS…SADG). A compositionally biased stretch (low complexity) spans 53-73 (GLGHLSPEGPLSLSEGPSSVG). Phosphoserine is present on Ser58. The segment covering 74-87 (PEGGPGGVGAGGGS) has biased composition (gly residues). Residues 189-201 (PGKRDYNGPKADG) are compositionally biased toward basic and acidic residues. Positions 221–245 (SHHHHHHHHHHHHQSRHGKRSKSKD) are enriched in basic residues. The span at 258–271 (GWWSSDDNLDSDSG) shows a compositional bias: low complexity. Phosphoserine occurs at positions 404, 407, 410, and 414. Pro residues predominate over residues 538–547 (APPPIPPGSQ). A phosphoserine mark is found at Ser641 and Ser643. Disordered stretches follow at residues 739-788 (EGYP…RTSP) and 906-939 (EEKK…RQRQ). Composition is skewed to basic and acidic residues over residues 767 to 777 (GRRDSWMERGS) and 925 to 939 (PVKE…RQRQ). Ser930, Ser933, and Ser965 each carry phosphoserine.

The protein belongs to the SAPAP family. As to quaternary structure, interacts with DLG4/PSD-95. Highly expressed in central and peripherical nervous system (at protein level).

It is found in the cell membrane. It localises to the postsynaptic density. The protein resides in the synapse. In terms of biological role, may play a role in the molecular organization of synapses and neuronal cell signaling. Could be an adapter protein linking ion channel to the subsynaptic cytoskeleton. May induce enrichment of PSD-95/SAP90 at the plasma membrane. The chain is Disks large-associated protein 3 (Dlgap3) from Mus musculus (Mouse).